We begin with the raw amino-acid sequence, 332 residues long: Adenosine deaminase (332 aa).

Zn(2+) contacts are provided by His-12 and His-14. 3 residues coordinate substrate: His-14, Asp-16, and Gly-170. A Zn(2+)-binding site is contributed by His-197. Residue Glu-200 is the Proton donor of the active site. Asp-278 contributes to the Zn(2+) binding site.

Belongs to the metallo-dependent hydrolases superfamily. Adenosine and AMP deaminases family. Adenosine deaminase subfamily. The cofactor is Zn(2+).

The catalysed reaction is adenosine + H2O + H(+) = inosine + NH4(+). The enzyme catalyses 2'-deoxyadenosine + H2O + H(+) = 2'-deoxyinosine + NH4(+). Catalyzes the hydrolytic deamination of adenosine and 2-deoxyadenosine. This is Adenosine deaminase from Clostridium perfringens (strain 13 / Type A).